The following is a 353-amino-acid chain: UDP-3-O-acylglucosamine N-acyltransferase (353 aa).

H242 acts as the Proton acceptor in catalysis.

This sequence belongs to the transferase hexapeptide repeat family. LpxD subfamily. Homotrimer.

The catalysed reaction is a UDP-3-O-[(3R)-3-hydroxyacyl]-alpha-D-glucosamine + a (3R)-hydroxyacyl-[ACP] = a UDP-2-N,3-O-bis[(3R)-3-hydroxyacyl]-alpha-D-glucosamine + holo-[ACP] + H(+). It participates in bacterial outer membrane biogenesis; LPS lipid A biosynthesis. Its function is as follows. Catalyzes the N-acylation of UDP-3-O-acylglucosamine using 3-hydroxyacyl-ACP as the acyl donor. Is involved in the biosynthesis of lipid A, a phosphorylated glycolipid that anchors the lipopolysaccharide to the outer membrane of the cell. This chain is UDP-3-O-acylglucosamine N-acyltransferase, found in Pseudomonas aeruginosa (strain UCBPP-PA14).